Here is a 707-residue protein sequence, read N- to C-terminus: Bone morphogenetic protein 1 (707 aa).

The segment at 57 to 90 (SGAATNISRPEKGRRTRKERRRSREKRASTSRPE) is disordered. The N-linked (GlcNAc...) asparagine glycan is linked to N62. Positions 68–81 (KGRRTRKERRRSRE) are enriched in basic residues. Residues 84 to 283 (ASTSRPERVW…AQARKLYKCP (200 aa)) form the Peptidase M12A domain. N-linked (GlcNAc...) asparagine glycosylation occurs at N105. Cystine bridges form between C126–C282, C146–C168, C148–C149, and C285–C311. H176 lines the Zn(2+) pocket. E177 is an active-site residue. Zn(2+)-binding residues include H180 and H186. 2 CUB domains span residues 285–397 (CGET…YEAL) and 398–509 (CGGE…NYFK). N-linked (GlcNAc...) asparagine glycosylation is found at N295 and N326. Cystine bridges form between C338–C360, C398–C424, C451–C473, C514–C526, C522–C535, C537–C550, C554–C580, and C607–C629. In terms of domain architecture, EGF-like; calcium-binding spans 510 to 551 (EVDECSRPNNGGCEQRCVNTLGSYKCACDPGYELGQDKKSCE). The CUB 3 domain maps to 554 to 666 (CGGFLTKLNG…KGFQANFFSE (113 aa)). The N-linked (GlcNAc...) asparagine glycan is linked to N562. Residues 682 to 707 (RGQQNQAPKRVRPRMRLRTVKKTRPP) are disordered. The span at 690–707 (KRVRPRMRLRTVKKTRPP) shows a compositional bias: basic residues.

In terms of assembly, interacts with olfml3/ont1. It depends on Zn(2+) as a cofactor. Proteolytically activated in the trans-Golgi network by furin-like/paired basic proprotein convertases, cleavage is not required for secretion.

It localises to the golgi apparatus. The protein localises to the trans-Golgi network. Its subcellular location is the secreted. The protein resides in the extracellular space. It is found in the extracellular matrix. In terms of biological role, metalloprotease involved in pattern formation in gastrula and later differentiation of developing organs. Able to cleave chordin (chrd), suggesting that it may act in dorsoventral patterning during early development by regulating the chordin (chrd) activity. This chain is Bone morphogenetic protein 1 (bmp1), found in Xenopus laevis (African clawed frog).